The following is a 115-amino-acid chain: UPF0295 protein BLi00901/BL05075 (115 aa).

2 helical membrane passes run 18-38 (LVFIGFIIMYVGVFFRSSVLL) and 41-61 (VFMILGVLSILLSTAVYFWIG).

This sequence belongs to the UPF0295 family.

The protein resides in the cell membrane. This is UPF0295 protein BLi00901/BL05075 from Bacillus licheniformis (strain ATCC 14580 / DSM 13 / JCM 2505 / CCUG 7422 / NBRC 12200 / NCIMB 9375 / NCTC 10341 / NRRL NRS-1264 / Gibson 46).